We begin with the raw amino-acid sequence, 240 residues long: 1-(5-phosphoribosyl)-5-[(5-phosphoribosylamino)methylideneamino] imidazole-4-carboxamide isomerase 1 (240 aa).

Asp-8 acts as the Proton acceptor in catalysis. The active-site Proton donor is Asp-129.

This sequence belongs to the HisA/HisF family.

The protein resides in the cytoplasm. It catalyses the reaction 1-(5-phospho-beta-D-ribosyl)-5-[(5-phospho-beta-D-ribosylamino)methylideneamino]imidazole-4-carboxamide = 5-[(5-phospho-1-deoxy-D-ribulos-1-ylimino)methylamino]-1-(5-phospho-beta-D-ribosyl)imidazole-4-carboxamide. Its pathway is amino-acid biosynthesis; L-histidine biosynthesis; L-histidine from 5-phospho-alpha-D-ribose 1-diphosphate: step 4/9. The sequence is that of 1-(5-phosphoribosyl)-5-[(5-phosphoribosylamino)methylideneamino] imidazole-4-carboxamide isomerase 1 from Ruegeria pomeroyi (strain ATCC 700808 / DSM 15171 / DSS-3) (Silicibacter pomeroyi).